Consider the following 150-residue polypeptide: Putative FAD-linked sulfhydryl oxidase 088R (150 aa).

The ERV/ALR sulfhydryl oxidase domain occupies 24-128 (GPFGPSGFGP…VTLQKAICIY (105 aa)). Cys-74 and Cys-77 are disulfide-bonded.

The cofactor is FAD.

The enzyme catalyses 2 R'C(R)SH + O2 = R'C(R)S-S(R)CR' + H2O2. Its function is as follows. FAD-dependent sulfhydryl oxidase that catalyzes disulfide bond formation. The sequence is that of Putative FAD-linked sulfhydryl oxidase 088R from Dryophytes versicolor (chameleon treefrog).